The primary structure comprises 253 residues: Ubiquinone biosynthesis O-methyltransferase (253 aa).

Arginine 45, glycine 76, aspartate 97, and methionine 140 together coordinate S-adenosyl-L-methionine.

Belongs to the methyltransferase superfamily. UbiG/COQ3 family.

It catalyses the reaction a 3-demethylubiquinol + S-adenosyl-L-methionine = a ubiquinol + S-adenosyl-L-homocysteine + H(+). It carries out the reaction a 3-(all-trans-polyprenyl)benzene-1,2-diol + S-adenosyl-L-methionine = a 2-methoxy-6-(all-trans-polyprenyl)phenol + S-adenosyl-L-homocysteine + H(+). It functions in the pathway cofactor biosynthesis; ubiquinone biosynthesis. O-methyltransferase that catalyzes the 2 O-methylation steps in the ubiquinone biosynthetic pathway. The polypeptide is Ubiquinone biosynthesis O-methyltransferase (Parvibaculum lavamentivorans (strain DS-1 / DSM 13023 / NCIMB 13966)).